The chain runs to 561 residues: TBC1 domain family member 24 (561 aa).

Residues K36 and R40 each contribute to the a 1,2-diacyl-sn-glycero-3-phospho-(1D-myo-inositol) site. One can recognise a Rab-GAP TBC domain in the interval 45-236 (AQSHTLRGKV…RVFDVFLVEG (192 aa)). A 1,2-diacyl-sn-glycero-3-phospho-(1D-myo-inositol) is bound by residues K238, R242, and 293-297 (RLFSR). A TLDc domain is found at 343–556 (EIVSVKEMRD…IAAVEAWGFQ (214 aa)). Phosphoserine is present on residues S475 and S482.

Interacts with ARF6. As to expression, expressed in brain, particularly at the level of the cortex and the hippocampus. Expressed in the inner ear in spiral ganglion cells, a collection of neurons critical for hearing and balance.

It localises to the cell membrane. The protein localises to the cytoplasm. The protein resides in the cytoplasmic vesicle membrane. It is found in the presynapse. Its function is as follows. May act as a GTPase-activating protein for Rab family protein(s). Involved in neuronal projections development, probably through a negative modulation of ARF6 function. Involved in the regulation of synaptic vesicle trafficking. The protein is TBC1 domain family member 24 (Tbc1d24) of Mus musculus (Mouse).